Consider the following 103-residue polypeptide: MATYAIVKTGGKQYKVAVGDLVKVEKIDSEPGSSVQLPVALVVDGATVTTDADKLAKVAVTGEIVEHTKGPKIRIHKFKNKTGYHKRQGHRQRLTVLKVTGIK.

The protein belongs to the bacterial ribosomal protein bL21 family. Part of the 50S ribosomal subunit. Contacts protein L20.

Functionally, this protein binds to 23S rRNA in the presence of protein L20. The sequence is that of Large ribosomal subunit protein bL21 from Mycobacteroides abscessus (strain ATCC 19977 / DSM 44196 / CCUG 20993 / CIP 104536 / JCM 13569 / NCTC 13031 / TMC 1543 / L948) (Mycobacterium abscessus).